Reading from the N-terminus, the 101-residue chain is Thiosulfate sulfurtransferase GlpE (101 aa).

One can recognise a Rhodanese domain in the interval 17 to 101 (EAKSVQIVDI…GFSAWHEANA (85 aa)). Residue Cys65 is the Cysteine persulfide intermediate of the active site.

Belongs to the GlpE family.

The protein resides in the cytoplasm. It catalyses the reaction thiosulfate + hydrogen cyanide = thiocyanate + sulfite + 2 H(+). It carries out the reaction thiosulfate + [thioredoxin]-dithiol = [thioredoxin]-disulfide + hydrogen sulfide + sulfite + 2 H(+). Its function is as follows. Transferase that catalyzes the transfer of sulfur from thiosulfate to thiophilic acceptors such as cyanide or dithiols. May function in a CysM-independent thiosulfate assimilation pathway by catalyzing the conversion of thiosulfate to sulfite, which can then be used for L-cysteine biosynthesis. The polypeptide is Thiosulfate sulfurtransferase GlpE (Shewanella oneidensis (strain ATCC 700550 / JCM 31522 / CIP 106686 / LMG 19005 / NCIMB 14063 / MR-1)).